The sequence spans 365 residues: Holliday junction branch migration complex subunit RuvB (365 aa).

The segment at 1-191 (MNFDPIDDFD…FGFTAHMDFY (191 aa)) is large ATPase domain (RuvB-L). ATP-binding positions include Leu-30, Arg-31, Gly-72, Lys-75, Thr-76, Ser-77, 138 to 140 (EDF), Arg-181, Tyr-191, and Arg-228. Thr-76 provides a ligand contact to Mg(2+). The tract at residues 192–262 (EPEELQQILM…VAQAALAVYD (71 aa)) is small ATPAse domain (RuvB-S). The tract at residues 265–365 (QLGLDRLDRS…QATLFDPNGE (101 aa)) is head domain (RuvB-H). The DNA site is built by Arg-320 and Arg-325.

This sequence belongs to the RuvB family. Homohexamer. Forms an RuvA(8)-RuvB(12)-Holliday junction (HJ) complex. HJ DNA is sandwiched between 2 RuvA tetramers; dsDNA enters through RuvA and exits via RuvB. An RuvB hexamer assembles on each DNA strand where it exits the tetramer. Each RuvB hexamer is contacted by two RuvA subunits (via domain III) on 2 adjacent RuvB subunits; this complex drives branch migration. In the full resolvosome a probable DNA-RuvA(4)-RuvB(12)-RuvC(2) complex forms which resolves the HJ.

Its subcellular location is the cytoplasm. It carries out the reaction ATP + H2O = ADP + phosphate + H(+). In terms of biological role, the RuvA-RuvB-RuvC complex processes Holliday junction (HJ) DNA during genetic recombination and DNA repair, while the RuvA-RuvB complex plays an important role in the rescue of blocked DNA replication forks via replication fork reversal (RFR). RuvA specifically binds to HJ cruciform DNA, conferring on it an open structure. The RuvB hexamer acts as an ATP-dependent pump, pulling dsDNA into and through the RuvAB complex. RuvB forms 2 homohexamers on either side of HJ DNA bound by 1 or 2 RuvA tetramers; 4 subunits per hexamer contact DNA at a time. Coordinated motions by a converter formed by DNA-disengaged RuvB subunits stimulates ATP hydrolysis and nucleotide exchange. Immobilization of the converter enables RuvB to convert the ATP-contained energy into a lever motion, pulling 2 nucleotides of DNA out of the RuvA tetramer per ATP hydrolyzed, thus driving DNA branch migration. The RuvB motors rotate together with the DNA substrate, which together with the progressing nucleotide cycle form the mechanistic basis for DNA recombination by continuous HJ branch migration. Branch migration allows RuvC to scan DNA until it finds its consensus sequence, where it cleaves and resolves cruciform DNA. The polypeptide is Holliday junction branch migration complex subunit RuvB (Rhodococcus erythropolis (strain PR4 / NBRC 100887)).